Here is a 590-residue protein sequence, read N- to C-terminus: DEAD-box ATP-dependent RNA helicase 27 (590 aa).

The tract at residues 1–92 is disordered; it reads MAPAPATTSS…EKGNEGGSGI (92 aa). Over residues 27-62 the composition is skewed to acidic residues; it reads SDSESEELSYDTAAADEEEGEEEAPNQMEELEEEQE. Residues 40–87 adopt a coiled-coil conformation; that stretch reads AADEEEGEEEAPNQMEELEEEQEEEKKEKKQKKEMSKEKKRKKEKGNE. Basic and acidic residues predominate over residues 63–76; sequence EEKKEKKQKKEMSK. The Q motif signature appears at 96–124; sequence MLFSELGVSEPTARAIREMNYTYLTQIQA. The Helicase ATP-binding domain occupies 127–302; sequence IPHLLNGKDV…KLSFEKNEES (176 aa). Residue 140–147 participates in ATP binding; sequence AKTGSGKT. Residues 250 to 253 carry the DEAD box motif; the sequence is DEAD. The Helicase C-terminal domain occupies 335–488; the sequence is RFLVLYAFLK…NKVPNLQSHL (154 aa). The interval 551 to 590 is disordered; it reads SASKHRRKMRKVDGGRRHGISAANPYGRKGGDDKRQFARF. Residues 579–590 show a composition bias toward basic and acidic residues; sequence KGGDDKRQFARF.

The protein belongs to the DEAD box helicase family. DDX18/HAS1 subfamily.

It catalyses the reaction ATP + H2O = ADP + phosphate + H(+). This chain is DEAD-box ATP-dependent RNA helicase 27, found in Oryza sativa subsp. japonica (Rice).